We begin with the raw amino-acid sequence, 286 residues long: Gap junction alpha-6 protein (286 aa).

The Cytoplasmic segment spans residues 1–23 (MSDWSALHQLLEKVQPYSTAGGK). Residues 24 to 41 (VWIKVLFIFRILLLGTAI) traverse the membrane as a helical segment. Residues 42 to 76 (ESAWSDEQFEFHCNTQQPGCENVCYDQAFPISHVR) are Extracellular-facing. The helical transmembrane segment at 77–99 (LWVLQVIFVSVPTLLHLAHVYYV) threads the bilayer. The Cytoplasmic segment spans residues 100–151 (IRQNEKLKKQEEEELKVAHFNGASGERRLQKHTGKHIKCGSKEHGNRKMRGR). Residues 152 to 174 (LLLTYMASIFFKSVFEVAFLLIQ) form a helical membrane-spanning segment. Residues 175–209 (WYLYGFTLSAVYICEQSPCPHRVDCFLSRPTEKTI) lie on the Extracellular side of the membrane. Residues 210-232 (FILFMLVVSMVSFVLNVIELFYV) form a helical membrane-spanning segment. Topologically, residues 233–286 (LFKAIKNHLGNEKEEVYCNPVELQKPSCVSSSAVLTTICSSDQVVPVGLSSFYM) are cytoplasmic.

It belongs to the connexin family. Alpha-type (group II) subfamily. In terms of assembly, a connexon is composed of a hexamer of connexins. As to expression, expressed in testis.

Its subcellular location is the cell membrane. The protein localises to the cell junction. It is found in the gap junction. Its function is as follows. One gap junction consists of a cluster of closely packed pairs of transmembrane channels, the connexons, through which materials of low MW diffuse from one cell to a neighboring cell. The sequence is that of Gap junction alpha-6 protein (Gja6) from Rattus norvegicus (Rat).